Reading from the N-terminus, the 258-residue chain is 14-3-3-like protein 16R (258 aa).

Residues 238-258 (DMQDDGTDEIKEAAPKPDNNE) are disordered. A compositionally biased stretch (basic and acidic residues) spans 245-258 (DEIKEAAPKPDNNE).

Belongs to the 14-3-3 family.

The polypeptide is 14-3-3-like protein 16R (Solanum tuberosum (Potato)).